Here is a 469-residue protein sequence, read N- to C-terminus: IAA-alanine resistance protein 1 (469 aa).

Positions Met-1–Ser-28 are cleaved as a signal peptide. Residues Ala-33–Asp-58 form a disordered region. The segment covering His-47–Asp-58 has biased composition (basic and acidic residues). The next 2 membrane-spanning stretches (helical) occupy residues Cys-114–Val-134 and Trp-141–His-161. Positions Gly-170–Ser-197 are disordered. The segment covering His-173 to Ser-193 has biased composition (basic and acidic residues). The helical transmembrane segment at Leu-201 to Val-221 threads the bilayer. Residues Ser-228 to Glu-315 are disordered. Positions Gly-235 to Lys-246 are enriched in basic residues. The span at Lys-247–Asn-256 shows a compositional bias: basic and acidic residues. Positions Leu-257–Asp-279 are enriched in polar residues. Residues Ala-292–Glu-315 show a composition bias toward basic and acidic residues. 3 helical membrane passes run Leu-387–Trp-407, Ser-415–Ala-435, and Ser-448–Ile-468.

It belongs to the ZIP transporter (TC 2.A.5) family. KE4/Catsup subfamily.

It localises to the membrane. May participate in auxin metabolism or response. Probable transporter. The polypeptide is IAA-alanine resistance protein 1 (IAR1) (Arabidopsis thaliana (Mouse-ear cress)).